The chain runs to 70 residues: Uteroglobin (70 aa).

It belongs to the secretoglobin family. Antiparallel homodimer; disulfide-linked. Interaction with LMBR1L is controversial. As to expression, club cells (nonciliated cells of the surface epithelium of the pulmonary airways).

The protein localises to the secreted. Its function is as follows. Binds phosphatidylcholine, phosphatidylinositol, polychlorinated biphenyls (PCB) and weakly progesterone, potent inhibitor of phospholipase A2. In Macaca fuscata fuscata (Japanese macaque), this protein is Uteroglobin (SCGB1A1).